An 84-amino-acid chain; its full sequence is Small ribosomal subunit protein bS18 (84 aa).

Belongs to the bacterial ribosomal protein bS18 family. In terms of assembly, part of the 30S ribosomal subunit. Forms a tight heterodimer with protein bS6.

Binds as a heterodimer with protein bS6 to the central domain of the 16S rRNA, where it helps stabilize the platform of the 30S subunit. This chain is Small ribosomal subunit protein bS18, found in Polynucleobacter necessarius subsp. necessarius (strain STIR1).